A 431-amino-acid polypeptide reads, in one-letter code: Ornithine aminotransferase, mitochondrial (431 aa).

At K286 the chain carries N6-(pyridoxal phosphate)lysine.

This sequence belongs to the class-III pyridoxal-phosphate-dependent aminotransferase family. As to quaternary structure, homotetramer. Pyridoxal 5'-phosphate is required as a cofactor.

The protein resides in the mitochondrion matrix. It catalyses the reaction a 2-oxocarboxylate + L-ornithine = L-glutamate 5-semialdehyde + an L-alpha-amino acid. The protein operates within amino-acid biosynthesis; L-proline biosynthesis; L-glutamate 5-semialdehyde from L-ornithine: step 1/1. The chain is Ornithine aminotransferase, mitochondrial (Oat) from Drosophila melanogaster (Fruit fly).